The chain runs to 80 residues: Omega-conotoxin-like 2/7 (80 aa).

The first 22 residues, 1–22, serve as a signal peptide directing secretion; the sequence is MKLTCMMIVAVMFLTASIFITA. The propeptide occupies 23–51; the sequence is DNSRNGIENLPRMRRHEMKKPKASKLNKR. Cystine bridges form between Cys-53–Cys-71, Cys-60–Cys-75, and Cys-70–Cys-79.

This sequence belongs to the conotoxin O1 superfamily. Expressed by the venom duct.

Its subcellular location is the secreted. In terms of biological role, omega-conotoxins act at presynaptic membranes, they bind and block voltage-gated calcium channels (Cav). The chain is Omega-conotoxin-like 2/7 from Conus imperialis (Imperial cone).